The following is a 164-amino-acid chain: Endoribonuclease YbeY (164 aa).

The Zn(2+) site is built by histidine 111, histidine 115, and histidine 121. A disordered region spans residues 140-164 (ELGHPDPYADDDAQKHSTVTIKDSE). Over residues 155-164 (HSTVTIKDSE) the composition is skewed to polar residues.

This sequence belongs to the endoribonuclease YbeY family. Requires Zn(2+) as cofactor.

It is found in the cytoplasm. Functionally, single strand-specific metallo-endoribonuclease involved in late-stage 70S ribosome quality control and in maturation of the 3' terminus of the 16S rRNA. This is Endoribonuclease YbeY from Pseudomonas fluorescens (strain SBW25).